We begin with the raw amino-acid sequence, 248 residues long: Spherulin-1B (248 aa).

The first 20 residues, 1–20 (MQVRNILVALVVVCFAVSEA), serve as a signal peptide directing secretion. Positions 61 to 207 (FDFKNSKLGV…SLNISSIQTV (147 aa)) constitute a Cupin type-1 domain. Residues H110, H112, E117, and H157 each coordinate Mn(2+). Residue N200 is glycosylated (N-linked (GlcNAc...) asparagine).

This sequence belongs to the germin family.

The protein resides in the secreted. It localises to the cell wall. The sequence is that of Spherulin-1B from Physarum polycephalum (Slime mold).